A 2153-amino-acid polypeptide reads, in one-letter code: Genome polyprotein (2153 aa).

G2 carries N-myristoyl glycine; by host lipidation. The Cytoplasmic portion of the chain corresponds to 2-1466 (GAQVSRQNVG…DLNIANSIIT (1465 aa)). The interval 565 to 582 (PITQNPVERYVDEVLNEV) is amphipathic alpha-helix. Active-site for protease 2A activity residues include H871 and D888. Zn(2+) contacts are provided by C905 and C907. C959 functions as the For protease 2A activity in the catalytic mechanism. The Zn(2+) site is built by C965 and H967. The interval 1091 to 1160 (SDSWLKKFTE…NLRAADTNTQ (70 aa)) is membrane-binding. An oligomerization region spans residues 1091–1224 (SDSWLKKFTE…PPGTGKSITT (134 aa)). The tract at residues 1112 to 1116 (GNKIS) is RNA-binding. Residues 1186-1346 (KRIKVLYHKC…YKDNQGKLDV (161 aa)) form the SF3 helicase domain. Residues C1353, C1364, and C1369 each contribute to the Zn(2+) site. The C4-type; degenerate zinc-finger motif lies at 1353–1369 (CDVDSKIGNAKCCPFVC). The RNA-binding stretch occupies residues 1396–1403 (EDKRRRQV). Positions 1407–1412 (MSAIFQ) are oligomerization. Residues 1467 to 1482 (IIANIISIAGIIYIIY) lie within the membrane without spanning it. Topologically, residues 1483–2153 (KLFCSLQGPY…LLRHEWYEKF (671 aa)) are cytoplasmic. Residue Y1492 is modified to O-(5'-phospho-RNA)-tyrosine. One can recognise a Peptidase C3 domain in the interval 1511 to 1689 (GPEEEFGMSI…FSSMLLRSYF (179 aa)). Residues H1550, E1581, and C1657 each act as for protease 3C activity in the active site. A RdRp catalytic domain is found at 1921–2034 (DCIMAFDYTN…SYKYKLDMEA (114 aa)). Residues D1927 and D2020 each contribute to the Mg(2+) site.

The protein belongs to the picornaviruses polyprotein family. As to quaternary structure, interacts with capsid protein VP1 and capsid protein VP3 to form heterotrimeric protomers. In terms of assembly, interacts with capsid protein VP0, and capsid protein VP3 to form heterotrimeric protomers. Five protomers subsequently associate to form pentamers which serve as building blocks for the capsid. Interacts with capsid protein VP2, capsid protein VP3 and capsid protein VP4 following cleavage of capsid protein VP0. Interacts with capsid protein VP1 and capsid protein VP3 in the mature capsid. As to quaternary structure, interacts with capsid protein VP0 and capsid protein VP1 to form heterotrimeric protomers. Five protomers subsequently associate to form pentamers which serve as building blocks for the capsid. Interacts with capsid protein VP4 in the mature capsid. Interacts with protein 2C; this interaction may be important for virion morphogenesis. In terms of assembly, interacts with capsid protein VP1 and capsid protein VP3. Homodimer. As to quaternary structure, homohexamer; forms a hexameric ring structure with 6-fold symmetry characteristic of AAA+ ATPases. Interacts (via N-terminus) with host RTN3 (via reticulon domain); this interaction is important for viral replication. Interacts with capsid protein VP3; this interaction may be important for virion morphogenesis. In terms of assembly, interacts with protein 3CD. Homodimer. Interacts with host GBF1. Interacts (via GOLD domain) with host ACBD3 (via GOLD domain); this interaction allows the formation of a viral protein 3A/ACBD3 heterotetramer with a 2:2 stoichiometry, which will stimulate the recruitment of host PI4KB in order to synthesize PI4P at the viral RNA replication sites. As to quaternary structure, interacts with RNA-directed RNA polymerase. In terms of assembly, interacts with protein 3AB and with RNA-directed RNA polymerase. Interacts with Viral protein genome-linked and with protein 3CD. Requires Mg(2+) as cofactor. Post-translationally, specific enzymatic cleavages in vivo by the viral proteases yield processing intermediates and the mature proteins. In terms of processing, myristoylation is required for the formation of pentamers during virus assembly. Further assembly of 12 pentamers and a molecule of genomic RNA generates the provirion. During virion maturation, immature virions are rendered infectious following cleavage of VP0 into VP4 and VP2. This maturation seems to be an autocatalytic event triggered by the presence of RNA in the capsid and it is followed by a conformational change infectious virion. Post-translationally, myristoylation is required during RNA encapsidation and formation of the mature virus particle. In terms of processing, VPg is uridylylated by the polymerase into VPg-pUpU. This acts as a nucleotide-peptide primer for the genomic RNA replication.

It localises to the virion. It is found in the host cytoplasm. Its subcellular location is the host cytoplasmic vesicle membrane. The protein localises to the host nucleus. It catalyses the reaction a ribonucleoside 5'-triphosphate + H2O = a ribonucleoside 5'-diphosphate + phosphate + H(+). It carries out the reaction Selective cleavage of Tyr-|-Gly bond in the picornavirus polyprotein.. The enzyme catalyses RNA(n) + a ribonucleoside 5'-triphosphate = RNA(n+1) + diphosphate. The catalysed reaction is Selective cleavage of Gln-|-Gly bond in the poliovirus polyprotein. In other picornavirus reactions Glu may be substituted for Gln, and Ser or Thr for Gly.. With respect to regulation, replication or transcription is subject to high level of random mutations by the nucleotide analog ribavirin. Its function is as follows. Forms an icosahedral capsid of pseudo T=3 symmetry with capsid proteins VP2 and VP3. The capsid is 300 Angstroms in diameter, composed of 60 copies of each capsid protein and enclosing the viral positive strand RNA genome. Capsid protein VP1 mainly forms the vertices of the capsid. Capsid protein VP1 interacts with host cell receptor to provide virion attachment to target host cells. This attachment induces virion internalization. Tyrosine kinases are probably involved in the entry process. After binding to its receptor, the capsid undergoes conformational changes. Capsid protein VP1 N-terminus (that contains an amphipathic alpha-helix) and capsid protein VP4 are externalized. Together, they shape a pore in the host membrane through which viral genome is translocated to host cell cytoplasm. In terms of biological role, forms an icosahedral capsid of pseudo T=3 symmetry with capsid proteins VP2 and VP3. The capsid is 300 Angstroms in diameter, composed of 60 copies of each capsid protein and enclosing the viral positive strand RNA genome. Lies on the inner surface of the capsid shell. After binding to the host receptor, the capsid undergoes conformational changes. Capsid protein VP4 is released, Capsid protein VP1 N-terminus is externalized, and together, they shape a pore in the host membrane through which the viral genome is translocated into the host cell cytoplasm. Functionally, component of immature procapsids, which is cleaved into capsid proteins VP4 and VP2 after maturation. Allows the capsid to remain inactive before the maturation step. Its function is as follows. Cysteine protease that cleaves viral polyprotein and specific host proteins. It is responsible for the autocatalytic cleavage between the P1 and P2 regions, which is the first cleavage occurring in the polyprotein. Also cleaves the host translation initiation factor EIF4G1, in order to shut down the capped cellular mRNA translation. Inhibits the host nucleus-cytoplasm protein and RNA trafficking by cleaving host members of the nuclear pores. Counteracts stress granule formation probably by antagonizing its assembly or promoting its dissassembly. In terms of biological role, plays an essential role in the virus replication cycle by acting as a viroporin. Creates a pore in the host endoplasmic reticulum and as a consequence releases Ca2+ in the cytoplasm of infected cell. In turn, high levels of cytoplasmic calcium may trigger membrane trafficking and transport of viral ER-associated proteins to viroplasms, sites of viral genome replication. Induces and associates with structural rearrangements of intracellular membranes. Displays RNA-binding, nucleotide binding and NTPase activities. May play a role in virion morphogenesis and viral RNA encapsidation by interacting with the capsid protein VP3. Functionally, localizes the viral replication complex to the surface of membranous vesicles. It inhibits host cell endoplasmic reticulum-to-Golgi apparatus transport and causes the disassembly of the Golgi complex, possibly through GBF1 interaction. This would result in depletion of MHC, trail receptors and IFN receptors at the host cell surface. Plays an essential role in viral RNA replication by recruiting ACBD3 and PI4KB at the viral replication sites, thereby allowing the formation of the rearranged membranous structures where viral replication takes place. Its function is as follows. Acts as a primer for viral RNA replication and remains covalently bound to viral genomic RNA. VPg is uridylylated prior to priming replication into VPg-pUpU. The oriI viral genomic sequence may act as a template for this. The VPg-pUpU is then used as primer on the genomic RNA poly(A) by the RNA-dependent RNA polymerase to replicate the viral genome. During genome replication, the VPg-RNA linkage is removed by the host TDP2, thereby accelerating replication. During the late stage of the replication cycle, host TDP2 is excluded from sites of viral RNA synthesis and encapsidation, allowing for the generation of progeny virions. In terms of biological role, involved in the viral replication complex and viral polypeptide maturation. It exhibits protease activity with a specificity and catalytic efficiency that is different from protease 3C. Protein 3CD lacks polymerase activity. Protein 3CD binds to the 5'UTR of the viral genome. Major viral protease that mediates proteolytic processing of the polyprotein. Cleaves host EIF5B, contributing to host translation shutoff. Also cleaves host PABPC1, contributing to host translation shutoff. Cleaves host NLRP1, triggers host N-glycine-mediated degradation of the autoinhibitory NLRP1 N-terminal fragment. Functionally, replicates the viral genomic RNA on the surface of intracellular membranes. May form linear arrays of subunits that propagate along a strong head-to-tail interaction called interface-I. Covalently attaches UMP to a tyrosine of VPg, which is used to prime RNA synthesis. The positive stranded RNA genome is first replicated at virus induced membranous vesicles, creating a dsRNA genomic replication form. This dsRNA is then used as template to synthesize positive stranded RNA genomes. ss(+)RNA genomes are either translated, replicated or encapsidated. The chain is Genome polyprotein from Human rhinovirus 16 (HRV-16).